The primary structure comprises 269 residues: Protein UL24 (269 aa).

Positions 191–244 (IEPRTQRARRRRGGAARGSASRPKRSHSGARDPPESAARQLPPADQTPTSTEGG) are disordered.

Belongs to the herpesviridae UL24 family.

The protein localises to the virion. It is found in the host cytoplasm. The protein resides in the host nucleus. Its subcellular location is the host nucleolus. It localises to the host Golgi apparatus. In terms of biological role, may participate in nuclear egress of viral particles. Plays a role in the dispersal of several host nucleolar proteins including NCL/nucleolin and NPM1. Since deletion of host NCL/nucleolin negatively impact on nuclear egress, UL24 supposedly acts on this process through its effect on host nucleoli. The chain is Protein UL24 from Homo sapiens (Human).